The chain runs to 286 residues: Cbb3-type cytochrome c oxidase subunit CcoP (286 aa).

The next 2 helical transmembrane spans lie at 11 to 31 (FGLI…SSLI) and 62 to 82 (VGWI…FFFG). 2 Cytochrome c domains span residues 116–195 (ELVD…MAEL) and 205–286 (QLID…LSNR). Residues cysteine 129, cysteine 132, histidine 133, methionine 174, cysteine 219, cysteine 222, histidine 223, and methionine 264 each contribute to the heme c site.

The protein belongs to the CcoP / FixP family. In terms of assembly, component of the cbb3-type cytochrome c oxidase at least composed of CcoN, CcoO, CcoQ and CcoP. Requires heme c as cofactor.

It is found in the cell inner membrane. The protein operates within energy metabolism; oxidative phosphorylation. C-type cytochrome. Part of the cbb3-type cytochrome c oxidase complex. CcoP subunit is required for transferring electrons from donor cytochrome c via its heme groups to CcoO subunit. From there, electrons are shuttled to the catalytic binuclear center of CcoN subunit where oxygen reduction takes place. The complex also functions as a proton pump. This Helicobacter pylori (strain ATCC 700392 / 26695) (Campylobacter pylori) protein is Cbb3-type cytochrome c oxidase subunit CcoP.